The chain runs to 347 residues: Melanoma-associated antigen B1 (347 aa).

The span at 1 to 17 (MPRGQKSKLRAREKRRK) shows a compositional bias: basic residues. Residues 1 to 104 (MPRGQKSKLR…QATTSTESSV (104 aa)) form a disordered region. Polar residues-rich tracts occupy residues 39-53 (PSSS…TSSP) and 89-102 (ENAS…STES). One can recognise an MAGE domain in the interval 108–307 (VAWEAGMLMH…RDFPSHYEEA (200 aa)). Positions 315–347 (AQVRSSVRARRRTTATTFRARSRAPFSRSSHPM) are disordered. Positions 328 to 347 (TATTFRARSRAPFSRSSHPM) are enriched in low complexity.

In terms of tissue distribution, expressed only in testis.

The protein is Melanoma-associated antigen B1 (MAGEB1) of Homo sapiens (Human).